The sequence spans 275 residues: Multi-heme protein MamP (275 aa).

The Cytoplasmic segment spans residues 1–6 (MNSKVA). A transmembrane span lies at residues 7–20 (LLVVGLAVVLALVI). Over 21–275 (GRQGPVAPQA…GPCEACHVIK (255 aa)) the chain is Lumenal. Positions 89–206 (KLKVFEGHWQ…GGLGFAQLEG (118 aa)) are PDZ. Residues 210 to 230 (ILAGDPRPHGYRGACTDCHPI) carry the MCR (magnetochrome) 1 motif. Residues Cys-224, Cys-227, His-228, Cys-268, Cys-271, and His-272 each coordinate heme. The MCR 2 motif lies at 250–274 (ITRDMVARSVNPHEVRGPCEACHVI).

It belongs to the magnetosome MamP family. As to quaternary structure, homodimer. Heme is required as a cofactor. Post-translationally, subject to proteolytic cleavage which requires both MamE and MamO.

It is found in the cell inner membrane. In terms of biological role, involved in redox-control of magnetite formation; oxidizes Fe(2+) to Fe(3+) or to mixed-valent Fe(2+)-Fe(3+) oxide minerals. May control magnetite crystal size and number. Overproduction of MamP leads to more crystals than normal during exponential growth of normal size; in stationary phase crystal numbers become wild-type. This is Multi-heme protein MamP (mamP) from Paramagnetospirillum magneticum (strain ATCC 700264 / AMB-1) (Magnetospirillum magneticum).